The chain runs to 99 residues: Large ribosomal subunit protein uL23 (99 aa).

Belongs to the universal ribosomal protein uL23 family. As to quaternary structure, part of the 50S ribosomal subunit. Contacts protein L29, and trigger factor when it is bound to the ribosome.

In terms of biological role, one of the early assembly proteins it binds 23S rRNA. One of the proteins that surrounds the polypeptide exit tunnel on the outside of the ribosome. Forms the main docking site for trigger factor binding to the ribosome. The sequence is that of Large ribosomal subunit protein uL23 from Streptococcus suis (strain 98HAH33).